A 428-amino-acid chain; its full sequence is RF4 protein (428 aa).

N-linked (GlcNAc...) asparagine glycans are attached at residues N8, N205, and N344.

Its function is as follows. Not known. In Kluyveromyces lactis (strain ATCC 8585 / CBS 2359 / DSM 70799 / NBRC 1267 / NRRL Y-1140 / WM37) (Yeast), this protein is RF4 protein (RF4).